Consider the following 93-residue polypeptide: Acylphosphatase (93 aa).

In terms of domain architecture, Acylphosphatase-like spans 5–93; sequence TAILRVTGFV…EDRKTFDIVY (89 aa). Catalysis depends on residues Arg20 and Asn38.

Belongs to the acylphosphatase family.

It catalyses the reaction an acyl phosphate + H2O = a carboxylate + phosphate + H(+). The chain is Acylphosphatase (acyP) from Listeria welshimeri serovar 6b (strain ATCC 35897 / DSM 20650 / CCUG 15529 / CIP 8149 / NCTC 11857 / SLCC 5334 / V8).